The following is a 348-amino-acid chain: Adenosine deaminase (348 aa).

2 residues coordinate Zn(2+): His16 and His18. Substrate contacts are provided by His18, Asp20, and Gly174. His201 lines the Zn(2+) pocket. Residue Glu204 is the Proton donor of the active site. Asp282 contributes to the Zn(2+) binding site.

Belongs to the metallo-dependent hydrolases superfamily. Adenosine and AMP deaminases family. Adenosine deaminase subfamily. It depends on Zn(2+) as a cofactor.

It carries out the reaction adenosine + H2O + H(+) = inosine + NH4(+). The enzyme catalyses 2'-deoxyadenosine + H2O + H(+) = 2'-deoxyinosine + NH4(+). Its function is as follows. Catalyzes the hydrolytic deamination of adenosine and 2-deoxyadenosine. This Clostridium kluyveri (strain ATCC 8527 / DSM 555 / NBRC 12016 / NCIMB 10680 / K1) protein is Adenosine deaminase.